A 197-amino-acid polypeptide reads, in one-letter code: Large ribosomal subunit protein bL25 (197 aa).

Belongs to the bacterial ribosomal protein bL25 family. CTC subfamily. In terms of assembly, part of the 50S ribosomal subunit; part of the 5S rRNA/L5/L18/L25 subcomplex. Contacts the 5S rRNA. Binds to the 5S rRNA independently of L5 and L18.

Functionally, this is one of the proteins that binds to the 5S RNA in the ribosome where it forms part of the central protuberance. In Hydrogenobaculum sp. (strain Y04AAS1), this protein is Large ribosomal subunit protein bL25.